We begin with the raw amino-acid sequence, 116 residues long: MDNKPSGSKKIRQGDTVVAIAGNSRGQIGTVQSCKGDRVIVQGLNVRKKHVKRSQEAPKGRIVEIERPIHISNLKVCVEGETTAKLKVRTNEQGHRQFVYHKDDQEVVYRSVKKPK.

Belongs to the universal ribosomal protein uL24 family. As to quaternary structure, part of the 50S ribosomal subunit.

Its function is as follows. One of two assembly initiator proteins, it binds directly to the 5'-end of the 23S rRNA, where it nucleates assembly of the 50S subunit. Functionally, one of the proteins that surrounds the polypeptide exit tunnel on the outside of the subunit. This Protochlamydia amoebophila (strain UWE25) protein is Large ribosomal subunit protein uL24.